A 790-amino-acid polypeptide reads, in one-letter code: DNA topoisomerase 1 (790 aa).

Composition is skewed to polar residues over residues 1–18 (MKSN…SNVM), 44–54 (KLSSGALNGNS), and 61–70 (SNLSCPSPYT). Residues 1 to 196 (MKSNPGITVI…KKRPDVSASV (196 aa)) are disordered. Positions 158–167 (QEEAAADDDP) are enriched in acidic residues. Over residues 168–181 (SISNRNKKSTTPAS) the composition is skewed to polar residues. Interaction with DNA stretches follow at residues 426-427 (KY), 490-495 (RAGNEK), and 581-583 (TAK). Positions 433–790 (SSSLKGKVTR…AMDVVLIFRF (358 aa)) constitute a Topo IB-type catalytic domain. Tyr-749 acts as the O-(3'-phospho-DNA)-tyrosine intermediate in catalysis.

It belongs to the type IB topoisomerase family.

The protein localises to the nucleus. The enzyme catalyses ATP-independent breakage of single-stranded DNA, followed by passage and rejoining.. In terms of biological role, releases the supercoiling and torsional tension of DNA introduced during the DNA replication and transcription by transiently cleaving and rejoining one strand of the DNA duplex. Introduces a single-strand break via transesterification at a target site in duplex DNA. The scissile phosphodiester is attacked by the catalytic tyrosine of the enzyme, resulting in the formation of a DNA-(3'-phosphotyrosyl)-enzyme intermediate and the expulsion of a 5'-OH DNA strand. The free DNA strand then rotates around the intact phosphodiester bond on the opposing strand, thus removing DNA supercoils. Finally, in the religation step, the DNA 5'-OH attacks the covalent intermediate to expel the active-site tyrosine and restore the DNA phosphodiester backbone. This is DNA topoisomerase 1 (TOP1) from Daucus carota (Wild carrot).